A 502-amino-acid polypeptide reads, in one-letter code: NADH-quinone oxidoreductase subunit N (502 aa).

14 helical membrane-spanning segments follow: residues 16-36 (TLVP…IDLF), 47-67 (MLSL…AGVF), 85-105 (LAIL…PLAL), 113-133 (FSYP…QFMV), 138-158 (LILI…LIAM), 172-192 (FTMG…FYAL), 213-233 (IGFV…KLSM), 248-268 (SAAL…IVAM), 273-293 (FLIH…VVVT), 310-330 (MLAY…LIGT), 337-357 (LFLY…MLWI), 387-407 (ASIM…ALFW), 410-430 (MYLM…IMAL), and 470-490 (TIIG…NQLI).

This sequence belongs to the complex I subunit 2 family. In terms of assembly, NDH-1 is composed of 14 different subunits. Subunits NuoA, H, J, K, L, M, N constitute the membrane sector of the complex.

The protein localises to the cell inner membrane. The catalysed reaction is a quinone + NADH + 5 H(+)(in) = a quinol + NAD(+) + 4 H(+)(out). Its function is as follows. NDH-1 shuttles electrons from NADH, via FMN and iron-sulfur (Fe-S) centers, to quinones in the respiratory chain. The immediate electron acceptor for the enzyme in this species is believed to be ubiquinone. Couples the redox reaction to proton translocation (for every two electrons transferred, four hydrogen ions are translocated across the cytoplasmic membrane), and thus conserves the redox energy in a proton gradient. The sequence is that of NADH-quinone oxidoreductase subunit N from Sulfurimonas denitrificans (strain ATCC 33889 / DSM 1251) (Thiomicrospira denitrificans (strain ATCC 33889 / DSM 1251)).